The primary structure comprises 81 residues: MAAVAAASAELLIIGWYIFRVLLQVFLECCIYWVGFAFRNPPGTQPIARSEVFRYSLQKLAYTVSRTGRHVLGERRQRAPN.

It belongs to the neuronatin family.

May participate in the maintenance of segment identity in the hindbrain and pituitary development, and maturation or maintenance of the overall structure of the nervous system. May function as a regulatory subunit of ion channels. This Sus scrofa (Pig) protein is Neuronatin (NNAT).